Reading from the N-terminus, the 98-residue chain is MSYRESRQRLERLTESPSHLTIWRRMQELSYESKFEYESFVSADGTKLHAKRSKKLDVKVIAGKSVIVGINESHREMRGEYDVKATVVGDADRDLSCF.

This is an uncharacterized protein from Archaeoglobus fulgidus (strain ATCC 49558 / DSM 4304 / JCM 9628 / NBRC 100126 / VC-16).